We begin with the raw amino-acid sequence, 442 residues long: Coiled-coil domain-containing protein 91 (442 aa).

The GGA1-binding motif stretch occupies residues 1 to 16 (MDDDDFGGFEAAETFD). The disordered stretch occupies residues 1-27 (MDDDDFGGFEAAETFDGEQGGNQAVSP). 2 positions are modified to phosphoserine: Ser43 and Ser46. 2 disordered regions span residues 48–80 (ELIL…ADSS) and 114–134 (HGAL…SNSQ). Coiled-coil stretches lie at residues 130–210 (VSNS…GHEA), 253–318 (HAQH…MKDV), and 346–408 (ARDQ…RRLD). The homodimerization stretch occupies residues 211–414 (LSIIVDEYKA…RRLDQVTRQR (204 aa)).

In terms of assembly, homodimer. Interacts with GGA1, GGA2 and AP1G1.

The protein localises to the membrane. It localises to the golgi apparatus. The protein resides in the trans-Golgi network membrane. It is found in the trans-Golgi network. In terms of biological role, involved in the regulation of membrane traffic through the trans-Golgi network (TGN). Functions in close cooperation with the GGAs in the sorting of hydrolases to lysosomes. This is Coiled-coil domain-containing protein 91 (Ccdc91) from Mus musculus (Mouse).